The primary structure comprises 115 residues: Large ribosomal subunit protein bL20 (115 aa).

This sequence belongs to the bacterial ribosomal protein bL20 family.

Functionally, binds directly to 23S ribosomal RNA and is necessary for the in vitro assembly process of the 50S ribosomal subunit. It is not involved in the protein synthesizing functions of that subunit. The sequence is that of Large ribosomal subunit protein bL20 from Prochlorococcus marinus (strain MIT 9215).